The following is a 262-amino-acid chain: Flap endonuclease Xni (262 aa).

Asp105 is a Mg(2+) binding site. The 5'-3' exonuclease domain occupies 162–254 (ERSQFLDLMA…LKDFRVIDSL (93 aa)). K(+)-binding residues include Leu172, Ala173, Pro181, Ile183, and Ile186. The interaction with DNA stretch occupies residues 185 to 190 (GIGPKS).

This sequence belongs to the Xni family. Mg(2+) is required as a cofactor. K(+) serves as cofactor.

Has flap endonuclease activity. During DNA replication, flap endonucleases cleave the 5'-overhanging flap structure that is generated by displacement synthesis when DNA polymerase encounters the 5'-end of a downstream Okazaki fragment. The sequence is that of Flap endonuclease Xni from Shewanella baltica (strain OS195).